A 600-amino-acid chain; its full sequence is MFNTRANKASDQSPTIPTESATLAELWERTVRSRPSSPAIVTNGETLSYDEVNARANRLARLLLDEGAGPGRLVALALPRSSHLVISVLAVAKAGAVFLPLDVNHPRERLSYQLADARPALLCTVRSAAARLPDGIEMPRVLLDSPERTAVLDALPDTDLTDDERGGPLAATDLAYVIYTSGSTGRPKGVALTGAGLPALAAAKVAAMRVTGDSRVLQFASPGFDAYLTELLAAFTAGATLVVPGTDTLAGDPLRRALRDGRVSHAVLPPAAVATMSPDAVPDLRVLVVAGEACPAGLVERWAPGRLLINAYGPTECTVCATMTGPLTPTDEVTIGRPIPGVSVYILDAERRPAAPGEIGELYLSGAGLAQGYLNSPDLTAQMFVPNPFAADGERMYRTGDLASRRADGDILFHGRIDDQVELRGFRVELGEVESVLSQHPDVAQAVAALWTDPAEGPQLVTYVVPAPGTTPSAGELREHAGRFLPDFMVPSAFTTIDAVPLTPGGKTDRAGLPDPVKATQPAGLGPRTPAEKVLCDIFRDLFDLVEIDVRSNFFEMGGNSILAVDLIQRAQEAGLTLMPRTVIDHPTIEQLAAIATLEE.

The segment at 505–526 is disordered; that stretch reads GGKTDRAGLPDPVKATQPAGLG. Residues 526 to 600 form the Carrier domain; it reads GPRTPAEKVL…QLAAIATLEE (75 aa). At Ser561 the chain carries O-(pantetheine 4'-phosphoryl)serine.

It belongs to the ATP-dependent AMP-binding enzyme family.

It functions in the pathway antibiotic biosynthesis; novobiocin biosynthesis. Functionally, together with NovI, involved in the formation of a beta-OH-Tyr intermediate in the novobiocin biosynthesis pathway, an aminocoumarin family antibiotic that targets bacterial DNA gyrases. The ATP-dependent AMP-binding region activates L-Tyr as L-tyrosyl-AMP and then transfers the L-tyrosyl group to the acyl carrier domain through thioester formation to form a tyrosyl-S intermediate that is covalently tethered to NovH (L-Tyr-S-NovH). The sequence is that of Novobiocin biosynthesis protein H (novH) from Streptomyces niveus (Streptomyces spheroides).